A 157-amino-acid chain; its full sequence is 2-C-methyl-D-erythritol 2,4-cyclodiphosphate synthase (157 aa).

Residues aspartate 8 and histidine 10 each contribute to the a divalent metal cation site. 4-CDP-2-C-methyl-D-erythritol 2-phosphate is bound by residues 8–10 and 34–35; these read DVH and HS. Histidine 42 contacts a divalent metal cation. 4-CDP-2-C-methyl-D-erythritol 2-phosphate contacts are provided by residues 56–58, 61–65, 100–106, 132–135, phenylalanine 139, and arginine 142; these read DIG, FPDTD, AQAPKMA, and TTTE.

Belongs to the IspF family. As to quaternary structure, homotrimer. A divalent metal cation serves as cofactor.

The enzyme catalyses 4-CDP-2-C-methyl-D-erythritol 2-phosphate = 2-C-methyl-D-erythritol 2,4-cyclic diphosphate + CMP. It participates in isoprenoid biosynthesis; isopentenyl diphosphate biosynthesis via DXP pathway; isopentenyl diphosphate from 1-deoxy-D-xylulose 5-phosphate: step 4/6. Functionally, involved in the biosynthesis of isopentenyl diphosphate (IPP) and dimethylallyl diphosphate (DMAPP), two major building blocks of isoprenoid compounds. Catalyzes the conversion of 4-diphosphocytidyl-2-C-methyl-D-erythritol 2-phosphate (CDP-ME2P) to 2-C-methyl-D-erythritol 2,4-cyclodiphosphate (ME-CPP) with a corresponding release of cytidine 5-monophosphate (CMP). This Pseudomonas aeruginosa (strain ATCC 15692 / DSM 22644 / CIP 104116 / JCM 14847 / LMG 12228 / 1C / PRS 101 / PAO1) protein is 2-C-methyl-D-erythritol 2,4-cyclodiphosphate synthase.